We begin with the raw amino-acid sequence, 134 residues long: D-ribose pyranase (134 aa).

His20 acts as the Proton donor in catalysis. Residues Asp28, His101, and 123-125 contribute to the substrate site; that span reads YSN.

The protein belongs to the RbsD / FucU family. RbsD subfamily. As to quaternary structure, homodecamer.

The protein resides in the cytoplasm. It carries out the reaction beta-D-ribopyranose = beta-D-ribofuranose. The protein operates within carbohydrate metabolism; D-ribose degradation; D-ribose 5-phosphate from beta-D-ribopyranose: step 1/2. Its function is as follows. Catalyzes the interconversion of beta-pyran and beta-furan forms of D-ribose. This Pseudomonas syringae pv. syringae (strain B728a) protein is D-ribose pyranase.